Here is a 356-residue protein sequence, read N- to C-terminus: MTERRIIHIDMDYFFAQVEMRDNPKLKGKPVIVGGKASSRGVVSTASYEARKYGVHSAMPMSQAHKLCPNGYFVTSNFGAYRETSAQIMSIFRSYTDKVEPMSLDEAYLDITELVRPDLPASKIAQYIRKDILEQTHLTASAGVSYNKFLAKLASGMNKPDGMTVIDYRNVHDILMTLDIGDFPGVGKASKKVMHDNGIFNGRDLYEKTEFELIRLFGKRGRGLYNKARGIDHSEVKSTRVRKSVGTERTFATDVNDDEEILRKVWELSGKTAERLNKLQKSAKTVTVKIKTYQFETLSKQMSLRDSVSSEEDIYNIAYLLYNDLKDPDVPIRLIGVTVGNLEQSTYKNMTIYDFI.

Residues 6-187 (IIHIDMDYFF…LDIGDFPGVG (182 aa)) form the UmuC domain. Mg(2+) contacts are provided by Asp-10 and Asp-105. Residue Glu-106 is part of the active site.

The protein belongs to the DNA polymerase type-Y family. As to quaternary structure, monomer. Mg(2+) serves as cofactor.

Its subcellular location is the cytoplasm. It catalyses the reaction DNA(n) + a 2'-deoxyribonucleoside 5'-triphosphate = DNA(n+1) + diphosphate. Its function is as follows. Poorly processive, error-prone DNA polymerase involved in untargeted mutagenesis. Copies undamaged DNA at stalled replication forks, which arise in vivo from mismatched or misaligned primer ends. These misaligned primers can be extended by PolIV. Exhibits no 3'-5' exonuclease (proofreading) activity. May be involved in translesional synthesis, in conjunction with the beta clamp from PolIII. The sequence is that of DNA polymerase IV from Staphylococcus aureus (strain MRSA252).